The following is a 561-amino-acid chain: Proline--tRNA ligase (561 aa).

The protein belongs to the class-II aminoacyl-tRNA synthetase family. ProS type 1 subfamily. As to quaternary structure, homodimer.

It localises to the cytoplasm. It catalyses the reaction tRNA(Pro) + L-proline + ATP = L-prolyl-tRNA(Pro) + AMP + diphosphate. Catalyzes the attachment of proline to tRNA(Pro) in a two-step reaction: proline is first activated by ATP to form Pro-AMP and then transferred to the acceptor end of tRNA(Pro). As ProRS can inadvertently accommodate and process non-cognate amino acids such as alanine and cysteine, to avoid such errors it has two additional distinct editing activities against alanine. One activity is designated as 'pretransfer' editing and involves the tRNA(Pro)-independent hydrolysis of activated Ala-AMP. The other activity is designated 'posttransfer' editing and involves deacylation of mischarged Ala-tRNA(Pro). The misacylated Cys-tRNA(Pro) is not edited by ProRS. The polypeptide is Proline--tRNA ligase (Thermosipho africanus (strain TCF52B)).